A 170-amino-acid polypeptide reads, in one-letter code: Peptide deformylase 2 (170 aa).

Residues C94 and H136 each contribute to the Fe cation site. The active site involves E137. H140 serves as a coordination point for Fe cation.

It belongs to the polypeptide deformylase family. Fe(2+) is required as a cofactor.

The enzyme catalyses N-terminal N-formyl-L-methionyl-[peptide] + H2O = N-terminal L-methionyl-[peptide] + formate. Its function is as follows. Removes the formyl group from the N-terminal Met of newly synthesized proteins. Requires at least a dipeptide for an efficient rate of reaction. N-terminal L-methionine is a prerequisite for activity but the enzyme has broad specificity at other positions. The sequence is that of Peptide deformylase 2 from Xanthomonas axonopodis pv. citri (strain 306).